Here is an 82-residue protein sequence, read N- to C-terminus: Diphthamide biosynthesis protein 3 (82 aa).

The 57-residue stretch at 8–64 (IYDEVEIEDMTYDPALQTYSYPCPCGDKFEIALADLQDGQDIAVCPSCSLMVRVIFE) folds into the DPH-type MB domain. Positions 30, 32, 52, and 55 each coordinate Fe cation.

It belongs to the DPH3 family. As to quaternary structure, component of the 2-(3-amino-3-carboxypropyl)histidine synthase complex composed of dph-1, dph-2, dph-3 and a NADH-dependent reductase, predominantly cbr-1. It depends on Fe(2+) as a cofactor.

Its subcellular location is the cytoplasm. It localises to the nucleus. It carries out the reaction [3Fe-4S](1+)-[protein] + Fe(2+)-[Dph3] = [3Fe-4S](0)-[protein] + Fe(3+)-[Dph3]. The enzyme catalyses 2 [3Fe-4S](0)-[protein] + 2 Fe(2+)-[Dph3] + NADH = 2 [4Fe-4S](1+)-[protein] + 2 [Dph3] + NAD(+) + H(+). Its pathway is protein modification; peptidyl-diphthamide biosynthesis. Required for the first step of diphthamide biosynthesis, a post-translational modification of histidine which occurs in elongation factor 2. Dph-1 and dph-2 transfer a 3-amino-3-carboxypropyl (ACP) group from S-adenosyl-L-methionine (SAM) to a histidine residue, the reaction is assisted by a reduction system comprising dph-3 and a NADH-dependent reductase, predominantly cbr-1. Acts as an electron donor to reduce the Fe-S cluster in dph1-dph2 keeping the [4Fe-4S] clusters in the active and reduced state. Restores iron to dph-1-dph-2 iron-sulfur clusters which have degraded from [4Fe-4S] to [3Fe-4S] by donating an iron atom to reform [4Fe-4S] clusters, in a manner dependent on the presence of elongation factor 2 and SAM. Associates with the elongator complex and is required for tRNA Wobble base modifications mediated by the elongator complex. The elongator complex is required for multiple tRNA modifications, including mcm5U (5-methoxycarbonylmethyl uridine), mcm5s 2U (5-methoxycarbonylmethyl-2-thiouridine), and ncm5U (5-carbamoylmethyl uridine). The chain is Diphthamide biosynthesis protein 3 (dph-3) from Neurospora crassa (strain ATCC 24698 / 74-OR23-1A / CBS 708.71 / DSM 1257 / FGSC 987).